Consider the following 394-residue polypeptide: Protein TsgA homolog (394 aa).

A run of 12 helical transmembrane segments spans residues 11 to 31 (WISY…GIVM), 51 to 71 (FLNA…EIIP), 76 to 96 (LVFG…GHNL), 101 to 121 (ISMF…TFLV), 134 to 154 (LLFT…AAAM), 162 to 182 (WYWV…LTLC), 206 to 226 (VGVL…LGFI), 246 to 266 (QLVS…SFIL), 274 to 294 (IVTV…STDN), 302 to 322 (ILAL…LGSL), 334 to 354 (FILT…GPIV), and 363 to 383 (LATA…LGFF).

The protein belongs to the major facilitator superfamily. TsgA family.

The protein resides in the cell inner membrane. The polypeptide is Protein TsgA homolog (Yersinia pseudotuberculosis serotype O:1b (strain IP 31758)).